We begin with the raw amino-acid sequence, 237 residues long: Probable septum site-determining protein MinC (237 aa).

Belongs to the MinC family. In terms of assembly, interacts with MinD and FtsZ.

In terms of biological role, cell division inhibitor that blocks the formation of polar Z ring septums. Rapidly oscillates between the poles of the cell to destabilize FtsZ filaments that have formed before they mature into polar Z rings. Prevents FtsZ polymerization. The protein is Probable septum site-determining protein MinC of Neisseria gonorrhoeae.